The primary structure comprises 489 residues: Blue-light-activated histidine kinase (489 aa).

The region spanning 19 to 93 (ATDPFRAAVE…AIKSAIAAEK (75 aa)) is the PAS domain. Cysteine 69 carries the post-translational modification S-4a-FMN cysteine. 2 PAC domains span residues 93–147 (KPID…ELEK) and 232–281 (YSIE…NKAL). An HWE histidine kinase domain region spans residues 259–341 (NPLVLGIVQD…LLKENWAGAT (83 aa)). At histidine 288 the chain carries Phosphohistidine; by autocatalysis.

In terms of processing, FMN binds covalently to cysteine after exposure to blue light and this bond is spontaneously broken in the dark.

The enzyme catalyses ATP + protein L-histidine = ADP + protein N-phospho-L-histidine.. In terms of biological role, photosensitive kinase that is involved in increased bacterial virulence upon exposure to light. Once ejected from an infected animal host, sunlight acts as an environmental signal that increases the virulence of the bacterium, preparing it for infection of the next host. This photoreceptor protein is directly related to the bacterium's survival and replication within host macrophages. The chain is Blue-light-activated histidine kinase from Brucella ovis (strain ATCC 25840 / 63/290 / NCTC 10512).